Here is a 217-residue protein sequence, read N- to C-terminus: Tectonin-1 (217 aa).

A run of 6 repeats spans residues 2–37 (VHWE…HWDG), 38–74 (HKWH…DRSN), 75–111 (NKWT…DHHH), 112–146 (NKWD…RWDG), 147–182 (SKVD…LKHG), and 183–217 (KDWE…KATL). The tract at residues 2–217 (VHWEKHEGEL…KLHHIYKATL (216 aa)) is 6 X approximate tandem repeats.

This sequence belongs to the tectonin family.

Its subcellular location is the cell surface. The protein resides in the cytoplasmic vesicle membrane. Its function is as follows. Probably involved in bacterial recognition. May be a lectin that function as part of a transmembrane signaling complex during phagocytosis. This Physarum polycephalum (Slime mold) protein is Tectonin-1 (TECA).